We begin with the raw amino-acid sequence, 272 residues long: MTAHASIATPGGISLATGRDVRLASRSGALTGSTAGFAPGFVQANLAILPAKLAFDFLRFCQRNPKPCPVIGVSEPGDPTLSSIGLDLDIRTDVPGYCVYKDGVLVDEPADLKAYWREDLVTFAIGCSLSFEEALMAADIPLRHVEKGVKVPMFRTNIACVPAGPFAGPMVVSMRPMTPANAIRAVQITSRFPSVHGAPIHIGLPEAIGIKDLSKPDYGDAVEILEGEIPVFWACGVTPQSVISAAKIEYALAHGPGMMLCTDLKNSALATG.

This sequence belongs to the D-glutamate cyclase family.

This Azorhizobium caulinodans (strain ATCC 43989 / DSM 5975 / JCM 20966 / LMG 6465 / NBRC 14845 / NCIMB 13405 / ORS 571) protein is Putative hydro-lyase AZC_4080.